Here is a 154-residue protein sequence, read N- to C-terminus: Bacterial ferritin (154 aa).

Residues 1-145 enclose the Ferritin-like diiron domain; that stretch reads MQGNQAVVDY…QQLRLIELIG (145 aa). Fe cation-binding residues include Glu18, Glu51, His54, Glu93, Glu127, and His130.

Belongs to the bacterioferritin family. As to quaternary structure, heterooligomer of 24 subunits, arranged as 12 dimers, that are packed together to form an approximately spherical molecule with a central cavity, in which large amounts of iron can be deposited.

The enzyme catalyses 4 Fe(2+) + O2 + 4 H(+) = 4 Fe(3+) + 2 H2O. It catalyses the reaction Fe(2+)(in) = Fe(2+)(out). In terms of biological role, iron-storage protein, whose ferroxidase center binds Fe(2+), oxidizes it using dioxygen to Fe(3+), and participates in the subsequent Fe(3+) oxide mineral core formation within the central cavity of the BFR protein shell. This is Bacterial ferritin (bfrA) from Neisseria meningitidis serogroup A / serotype 4A (strain DSM 15465 / Z2491).